The sequence spans 488 residues: MSNTNFSTSRSSKSIPELPNLEALRSLWPPPSLNESGDTRSVWTTHTGEPVASSVLSTSGSNNFSSPLKRPAPESHDAPIGRRLMVDDPRLIKHGKYDFSRHCTDYGHSYEWPYFRSLRRESMLYHTSGSYPESQPPYSSYSTDAPHYYHAGSESSAYYDSRSRLHGIQPPPKRRTLSPPPRRLADPVVVGSSRYVEEEVYRRPPYTLASEVPSSASAYQAGYSSYPVRSSPQLSHEDTRHGIASSGSTRYPFVPANTRASHSPSLLEPYAHSLPSSVAPVGAYPEKSSYLLSNSSNDSASRKEKPKARASTPPPLNFSRASEHRNEKGERISMINPRVVLDENGISHRSRYFIMLCDNETAIAHAKKTSIWAVKKDSSKRISDAYKKASVYFIFVAQQTYNALGYAQVVSDLNSTELPFWSDSSHAGGVRIKWIKTCNLFSAEISEIVSHMDHGSEARDGMEMMYDEGSRLCTLINYAIMKRIGRDR.

Polar residues-rich tracts occupy residues 1–14 (MSNTNFSTSRSSKS), 33–47 (LNESGDTRSVWTTHT), and 54–66 (SVLSTSGSNNFSS). Disordered stretches follow at residues 1-20 (MSNTNFSTSRSSKSIPELPN) and 25-80 (RSLW…DAPI). Basic and acidic residues predominate over residues 71–80 (PAPESHDAPI). Residues 95–122 (GKYDFSRHCTDYGHSYEWPYFRSLRRES) form an interaction with erh1 region. Disordered stretches follow at residues 163–185 (SRLHGIQPPPKRRTLSPPPRRLA) and 225–261 (SYPVRSSPQLSHEDTRHGIASSGSTRYPFVPANTRAS). Thr176 carries the phosphothreonine modification. Phosphoserine occurs at positions 178, 230, 231, 261, 263, and 265. The span at 289 to 299 (SYLLSNSSNDS) shows a compositional bias: low complexity. Positions 289–328 (SYLLSNSSNDSASRKEKPKARASTPPPLNFSRASEHRNEK) are disordered. Ser311 carries the phosphoserine modification. Residue Thr312 is modified to Phosphothreonine. The region spanning 350 to 476 (SRYFIMLCDN…DEGSRLCTLI (127 aa)) is the YTH domain.

In terms of assembly, component of the erh1-mmi1 complex composed of mmi1 and erh1. Interacts (via N-terminus) with erh1 in a 2:2 stoichiometry. Interacts with rrp6.

The protein localises to the nucleus. In terms of biological role, RNA-binding protein that recognizes and binds N6-methyladenosine (m6A)-containing RNAs, a modification present at internal sites of mRNAs and some non-coding RNAs. Functions alone and as part of the erh1-mmi1 complex, to recruit the CCR4-NOT complex and the NURS complex to target RNAs. Suppresses the meiotic program during vegetative growth and promotes the meiotic program during mating. Binds to DSR (determinant of selective removal) regions in meiotic mRNA, and recruits the NURS complex to targets. Recruitment of NURS complex to target mRNAs promotes mRNA decay by engagement of the nuclear exosome, and formation of heterochromatin islands at meiotic genes silenced by the exosome. Recruitment of the CCR4-NOT complex to target RNAs promotes heterochromatin formation at RNAi-dependent heterochromatin domains (HOODs), including a subset of meiotic genes, lncRNAs and retrotransposons. Recruitment of the CCR4-NOT complex to rDNA promotes rDNA heterochromatin assembly. Promotes non-canonical transcription termination at meiotic genes and prevents lncRNA transcription from invading and repressing adjacent genes. In Schizosaccharomyces pombe (strain 972 / ATCC 24843) (Fission yeast), this protein is RNA binding exosome specificity factor Mmi1 (mmi1).